Here is a 501-residue protein sequence, read N- to C-terminus: Aldehyde dehydrogenase, cytosolic 1 (501 aa).

246 to 251 (GSTEVG) provides a ligand contact to NAD(+). The active-site Proton acceptor is Glu-269. Cys-303 serves as the catalytic Nucleophile.

The protein belongs to the aldehyde dehydrogenase family. In terms of assembly, homotetramer. Eye specific, with very high expression in the lens.

The protein resides in the cytoplasm. The enzyme catalyses an aldehyde + NAD(+) + H2O = a carboxylate + NADH + 2 H(+). It participates in alcohol metabolism; ethanol degradation; acetate from ethanol: step 2/2. Its function is as follows. Major component of the eye of elephant shrews, which in contrast to other mammals, possesses both a lens- and a non-lens class-1 aldehyde dehydrogenase 1. This eye-specific form is a structural protein of the lens and, in other part of the eye, serves as the major form of ALDH1. Can convert/oxidize retinaldehyde to retinoic acid. This chain is Aldehyde dehydrogenase, cytosolic 1 (ALDH1), found in Macroscelides proboscideus (Short-eared elephant shrew).